Here is a 264-residue protein sequence, read N- to C-terminus: Small ribosomal subunit protein uS3 (264 aa).

A KH type-2 domain is found at 39-107; it reads VREYLKKKLK…PVHVNIEEIR (69 aa). Positions 214–264 are disordered; the sequence is PVETAAPREEERRPRRAPRGDRPDGARNGRPGGGRGRAPRKADAAPAPEGE. The segment covering 219 to 240 has biased composition (basic and acidic residues); that stretch reads APREEERRPRRAPRGDRPDGAR.

Belongs to the universal ribosomal protein uS3 family. In terms of assembly, part of the 30S ribosomal subunit. Forms a tight complex with proteins S10 and S14.

In terms of biological role, binds the lower part of the 30S subunit head. Binds mRNA in the 70S ribosome, positioning it for translation. The sequence is that of Small ribosomal subunit protein uS3 from Bordetella avium (strain 197N).